The sequence spans 457 residues: Dihydrolipoyllysine-residue acetyltransferase component of pyruvate dehydrogenase complex, mitochondrial (457 aa).

The N-terminal 30 residues, 1 to 30 (MLSAALRRRVLAPTHSALRTGFAAHVVRHY), are a transit peptide targeting the mitochondrion. Residues 36–112 (HQVIKMPALS…PVGSPIAVLV (77 aa)) enclose the Lipoyl-binding domain. At K77 the chain carries N6-lipoyllysine. The segment at 129 to 168 (AGGDAAKPAAPKKEEKSESKSESASAPEPTPEPQQYQSQG) is disordered. Positions 139–149 (PKKEEKSESKS) are enriched in basic and acidic residues. K148 carries the N6-crotonyllysine modification. Residues 179–216 (NISASAKRLAREKGISIDGLKGTGKNGQITEEDVKKAI) form the Peripheral subunit-binding (PSBD) domain. Residues H430 and D434 contribute to the active site.

This sequence belongs to the 2-oxoacid dehydrogenase family. As to quaternary structure, eukaryotic pyruvate dehydrogenase (PDH) complexes are organized as a core consisting of the oligomeric dihydrolipoamide acetyl-transferase (E2), around which are arranged multiple copies of pyruvate dehydrogenase (E1), dihydrolipoamide dehydrogenase (E3) and protein X (E3BP) bound by non-covalent bonds. Interacts with SIR5; the interaction is direct. (R)-lipoate is required as a cofactor. Post-translationally, decrotonylated at 'Lys-148' by SIR5, which inhibits the activity of the pyruvate dehydrogenase complex (PDC).

The protein resides in the mitochondrion matrix. It catalyses the reaction N(6)-[(R)-dihydrolipoyl]-L-lysyl-[protein] + acetyl-CoA = N(6)-[(R)-S(8)-acetyldihydrolipoyl]-L-lysyl-[protein] + CoA. The pyruvate dehydrogenase complex catalyzes the overall conversion of pyruvate to acetyl-CoA and CO(2). High pyruvate dehydrogenase complex activity is required for sufficient energy production during germination of conidia. The sequence is that of Dihydrolipoyllysine-residue acetyltransferase component of pyruvate dehydrogenase complex, mitochondrial from Fusarium oxysporum f. sp. lycopersici (strain 4287 / CBS 123668 / FGSC 9935 / NRRL 34936) (Fusarium vascular wilt of tomato).